A 408-amino-acid polypeptide reads, in one-letter code: Phosphoglycerate kinase (408 aa).

Residues 22–24 (DIN), Arg-39, 60–63 (HQSR), Arg-117, and Arg-157 each bind substrate. ATP contacts are provided by residues Glu-332 and 358–361 (GGHT).

The protein belongs to the phosphoglycerate kinase family. Monomer.

The protein resides in the cytoplasm. It catalyses the reaction (2R)-3-phosphoglycerate + ATP = (2R)-3-phospho-glyceroyl phosphate + ADP. It participates in carbohydrate degradation; glycolysis; pyruvate from D-glyceraldehyde 3-phosphate: step 2/5. This Thermoplasma acidophilum (strain ATCC 25905 / DSM 1728 / JCM 9062 / NBRC 15155 / AMRC-C165) protein is Phosphoglycerate kinase (pgk).